We begin with the raw amino-acid sequence, 455 residues long: Bifunctional protein GlmU (455 aa).

Residues 1-230 (MANRFAVILA…FDETIGINDR (230 aa)) form a pyrophosphorylase region. UDP-N-acetyl-alpha-D-glucosamine is bound by residues 9–12 (LAAG), K23, Q73, and 78–79 (GT). Mg(2+) is bound at residue D103. UDP-N-acetyl-alpha-D-glucosamine is bound by residues G140, E155, N170, and N228. N228 provides a ligand contact to Mg(2+). Residues 231–251 (IALAEAEKIMKKRINEQHMRN) form a linker region. The interval 252–455 (GVSIIDPEQT…KEEYASKFKK (204 aa)) is N-acetyltransferase. Residues R333 and K351 each coordinate UDP-N-acetyl-alpha-D-glucosamine. H363 serves as the catalytic Proton acceptor. Residues Y366 and N377 each contribute to the UDP-N-acetyl-alpha-D-glucosamine site. Acetyl-CoA contacts are provided by residues 386–387 (NY), A423, and R440.

In the N-terminal section; belongs to the N-acetylglucosamine-1-phosphate uridyltransferase family. This sequence in the C-terminal section; belongs to the transferase hexapeptide repeat family. Homotrimer. Mg(2+) is required as a cofactor.

It is found in the cytoplasm. The catalysed reaction is alpha-D-glucosamine 1-phosphate + acetyl-CoA = N-acetyl-alpha-D-glucosamine 1-phosphate + CoA + H(+). It carries out the reaction N-acetyl-alpha-D-glucosamine 1-phosphate + UTP + H(+) = UDP-N-acetyl-alpha-D-glucosamine + diphosphate. Its pathway is nucleotide-sugar biosynthesis; UDP-N-acetyl-alpha-D-glucosamine biosynthesis; N-acetyl-alpha-D-glucosamine 1-phosphate from alpha-D-glucosamine 6-phosphate (route II): step 2/2. The protein operates within nucleotide-sugar biosynthesis; UDP-N-acetyl-alpha-D-glucosamine biosynthesis; UDP-N-acetyl-alpha-D-glucosamine from N-acetyl-alpha-D-glucosamine 1-phosphate: step 1/1. It functions in the pathway bacterial outer membrane biogenesis; LPS lipid A biosynthesis. In terms of biological role, catalyzes the last two sequential reactions in the de novo biosynthetic pathway for UDP-N-acetylglucosamine (UDP-GlcNAc). The C-terminal domain catalyzes the transfer of acetyl group from acetyl coenzyme A to glucosamine-1-phosphate (GlcN-1-P) to produce N-acetylglucosamine-1-phosphate (GlcNAc-1-P), which is converted into UDP-GlcNAc by the transfer of uridine 5-monophosphate (from uridine 5-triphosphate), a reaction catalyzed by the N-terminal domain. This Oceanobacillus iheyensis (strain DSM 14371 / CIP 107618 / JCM 11309 / KCTC 3954 / HTE831) protein is Bifunctional protein GlmU.